Reading from the N-terminus, the 329-residue chain is Ubiquitin carboxyl-terminal hydrolase isozyme L5 (329 aa).

One can recognise a UCH catalytic domain in the interval 7–225; sequence EWCLMESDPG…IRFNLMAIVS (219 aa). K47 bears the N6-succinyllysine mark. Residue C88 is the Nucleophile of the active site. K158 carries the post-translational modification N6-acetyllysine. H164 (proton donor) is an active-site residue. K289 bears the N6-succinyllysine mark. The ULD domain maps to 291–319; it reads NYLPFIMELLKTLAEHQQLIPLVEKAKEK. The tract at residues 313–329 is interaction with ADRM1; that stretch reads VEKAKEKQNAKKAQETK.

It belongs to the peptidase C12 family. In terms of assembly, component of the 19S (PA700) regulatory complex of the 26S proteasome. Interacts with ADRM1 and NFRKB. Component of the INO80 complex; specifically part of a complex module associated with N-terminus of INO80.

Its subcellular location is the cytoplasm. It is found in the nucleus. It carries out the reaction Thiol-dependent hydrolysis of ester, thioester, amide, peptide and isopeptide bonds formed by the C-terminal Gly of ubiquitin (a 76-residue protein attached to proteins as an intracellular targeting signal).. With respect to regulation, activated by ADRM1. Inhibited by interaction with NFRKB. Functionally, protease that specifically cleaves 'Lys-48'-linked polyubiquitin chains. Deubiquitinating enzyme associated with the 19S regulatory subunit of the 26S proteasome. Putative regulatory component of the INO80 complex; however is inactive in the INO80 complex and is activated by a transient interaction of the INO80 complex with the proteasome via ADRM1. The protein is Ubiquitin carboxyl-terminal hydrolase isozyme L5 (Uchl5) of Mus musculus (Mouse).